Here is a 479-residue protein sequence, read N- to C-terminus: Poly(A) polymerase catalytic subunit (479 aa).

Active-site residues include Asp-202 and Asp-204. Ca(2+) contacts are provided by Asp-202, Asp-204, and Asp-253.

The protein belongs to the poxviridae poly(A) polymerase catalytic subunit family. Heterodimer of a large (catalytic) subunit and a small (regulatory) subunit.

It carries out the reaction RNA(n) + ATP = RNA(n)-3'-adenine ribonucleotide + diphosphate. Polymerase that creates the 3'-poly(A) tail of mRNA's. This is Poly(A) polymerase catalytic subunit (OPG063) from Bos taurus (Bovine).